The chain runs to 433 residues: L-saccharopine oxidase (433 aa).

The first 18 residues, 1–18, serve as a signal peptide directing secretion; it reads MSRTIVIVGCGVFGLSTA. Asn-24, Asn-119, Asn-188, and Asn-229 each carry an N-linked (GlcNAc...) asparagine glycan.

Belongs to the MSOX/MTOX family. Monomer. FAD is required as a cofactor.

It localises to the secreted. The protein localises to the cytoplasm. The protein resides in the nucleus. It catalyses the reaction L-saccharopine + O2 + H2O = (S)-2-amino-6-oxohexanoate + L-glutamate + H2O2. This is L-saccharopine oxidase from Schizosaccharomyces pombe (strain 972 / ATCC 24843) (Fission yeast).